A 311-amino-acid chain; its full sequence is Homeobox-leucine zipper protein HOX1 (311 aa).

2 disordered regions span residues 29–69 (AGGA…SDHR) and 97–160 (AETT…KKLR). A compositionally biased stretch (low complexity) spans 119–145 (SSPNSTLSSLSGKRGAPSAATAAAAAA). Residues 154-213 (GSRKKLRLSKDQAAVLEDTFKEHNTLNPKQKAALARQLNLKPRQVEVWFQNRRARTKLKQ) constitute a DNA-binding region (homeobox). The segment at 212–256 (KQTEVDCELLKRCCETLTDENRRLHRELQELRALKLATAAAAPHH) is leucine-zipper. A disordered region spans residues 279 to 311 (SAATTTRNNSGAAPARPVPTRPWPPAAAQRSSA). Over residues 280 to 289 (AATTTRNNSG) the composition is skewed to polar residues. A compositionally biased stretch (pro residues) spans 294–303 (RPVPTRPWPP).

The protein belongs to the HD-ZIP homeobox family. Class II subfamily. In terms of assembly, homodimer. May form a heterodimer with HOX2, HOX3 or HOX7. In terms of tissue distribution, expressed in root provascular and vascular cylinder, provascular and vascular strands of leaves, provascular and vascular strands of the whole panicle, in mature embryo provascular bundles of scutellum and embryonic axis and provascular and vascular strands of young immature spikelet organs. Expressed in differentiating and differentiated xylem and phloem elements, and in outer and inner bundle sheath cells of all vascular bundles. Expressed in auricles, ligules, culm, guard cells brac hairs and pollen.

It localises to the nucleus. In terms of biological role, probable transcription repressor involved leaf development. Binds to the DNA sequence 5'-CAAT[GC]ATTG-3'. May act as a regulatory switch to specify provascular cell fate. The protein is Homeobox-leucine zipper protein HOX1 (HOX1) of Oryza sativa subsp. indica (Rice).